We begin with the raw amino-acid sequence, 348 residues long: Protein pelota homolog (348 aa).

Belongs to the eukaryotic release factor 1 family. Pelota subfamily. As to quaternary structure, monomer. A divalent metal cation serves as cofactor.

The protein localises to the cytoplasm. Functionally, may function in recognizing stalled ribosomes, interact with stem-loop structures in stalled mRNA molecules, and effect endonucleolytic cleavage of the mRNA. May play a role in the release non-functional ribosomes and degradation of damaged mRNAs. Has endoribonuclease activity. The polypeptide is Protein pelota homolog (Methanococcus maripaludis (strain C7 / ATCC BAA-1331)).